The following is a 492-amino-acid chain: Steroid 21-hydroxylase (492 aa).

Residues R92 and K121 each contribute to the heme b site. R232 is a binding site for 17alpha-hydroxyprogesterone. Progesterone is bound at residue R232. The heme b site is built by H364, R425, and C427.

It belongs to the cytochrome P450 family. It depends on heme b as a cofactor.

It localises to the endoplasmic reticulum membrane. Its subcellular location is the microsome membrane. It carries out the reaction progesterone + reduced [NADPH--hemoprotein reductase] + O2 = 21-hydroxyprogesterone + oxidized [NADPH--hemoprotein reductase] + H2O + H(+). The enzyme catalyses 17alpha-hydroxyprogesterone + reduced [NADPH--hemoprotein reductase] + O2 = 11-deoxycortisol + oxidized [NADPH--hemoprotein reductase] + H2O + H(+). Its function is as follows. A cytochrome P450 monooxygenase that plays a major role in adrenal steroidogenesis. Catalyzes the hydroxylation at C-21 of progesterone and 17alpha-hydroxyprogesterone to respectively form 11-deoxycorticosterone and 11-deoxycortisol, intermediate metabolites in the biosynthetic pathway of mineralocorticoids and glucocorticoids. Mechanistically, uses molecular oxygen inserting one oxygen atom into a substrate, and reducing the second into a water molecule, with two electrons provided by NADPH via cytochrome P450 reductase (CPR; NADPH-ferrihemoprotein reductase). This chain is Steroid 21-hydroxylase (CYP21), found in Sus scrofa (Pig).